We begin with the raw amino-acid sequence, 156 residues long: Endoribonuclease YbeY (156 aa).

Residues His114, His118, and His124 each coordinate Zn(2+).

This sequence belongs to the endoribonuclease YbeY family. The cofactor is Zn(2+).

The protein resides in the cytoplasm. In terms of biological role, single strand-specific metallo-endoribonuclease involved in late-stage 70S ribosome quality control and in maturation of the 3' terminus of the 16S rRNA. This Sodalis glossinidius (strain morsitans) protein is Endoribonuclease YbeY.